A 260-amino-acid polypeptide reads, in one-letter code: Indole-3-glycerol phosphate synthase (260 aa).

The protein belongs to the TrpC family.

It carries out the reaction 1-(2-carboxyphenylamino)-1-deoxy-D-ribulose 5-phosphate + H(+) = (1S,2R)-1-C-(indol-3-yl)glycerol 3-phosphate + CO2 + H2O. Its pathway is amino-acid biosynthesis; L-tryptophan biosynthesis; L-tryptophan from chorismate: step 4/5. The sequence is that of Indole-3-glycerol phosphate synthase from Staphylococcus aureus (strain MSSA476).